The primary structure comprises 224 residues: Cytidylate kinase (224 aa).

11 to 19 (GPAGAGKST) lines the ATP pocket.

The protein belongs to the cytidylate kinase family. Type 1 subfamily.

The protein resides in the cytoplasm. It catalyses the reaction CMP + ATP = CDP + ADP. The enzyme catalyses dCMP + ATP = dCDP + ADP. This is Cytidylate kinase from Exiguobacterium sp. (strain ATCC BAA-1283 / AT1b).